The primary structure comprises 520 residues: 2-isopropylmalate synthase (520 aa).

The region spanning 12 to 274 is the Pyruvate carboxyltransferase domain; it reads VLIFDTTLRD…TTGIDTTQIM (263 aa). Mn(2+) contacts are provided by aspartate 21, histidine 209, histidine 211, and asparagine 245. The regulatory domain stretch occupies residues 398-520; that stretch reads RLLSLTVIAG…RLHAQHAAAE (123 aa).

The protein belongs to the alpha-IPM synthase/homocitrate synthase family. LeuA type 1 subfamily. Homodimer. The cofactor is Mn(2+).

It is found in the cytoplasm. It carries out the reaction 3-methyl-2-oxobutanoate + acetyl-CoA + H2O = (2S)-2-isopropylmalate + CoA + H(+). It participates in amino-acid biosynthesis; L-leucine biosynthesis; L-leucine from 3-methyl-2-oxobutanoate: step 1/4. Functionally, catalyzes the condensation of the acetyl group of acetyl-CoA with 3-methyl-2-oxobutanoate (2-ketoisovalerate) to form 3-carboxy-3-hydroxy-4-methylpentanoate (2-isopropylmalate). The sequence is that of 2-isopropylmalate synthase from Methylobacterium nodulans (strain LMG 21967 / CNCM I-2342 / ORS 2060).